The following is a 537-amino-acid chain: ATP synthase subunit alpha (537 aa).

Residue 171 to 178 (GDRQTGKT) coordinates ATP.

Belongs to the ATPase alpha/beta chains family. F-type ATPases have 2 components, CF(1) - the catalytic core - and CF(0) - the membrane proton channel. CF(1) has five subunits: alpha(3), beta(3), gamma(1), delta(1), epsilon(1). CF(0) has four main subunits: a, b, b' and c.

It localises to the cell inner membrane. It carries out the reaction ATP + H2O + 4 H(+)(in) = ADP + phosphate + 5 H(+)(out). Its function is as follows. Produces ATP from ADP in the presence of a proton gradient across the membrane. The alpha chain is a regulatory subunit. The chain is ATP synthase subunit alpha from Chloroherpeton thalassium (strain ATCC 35110 / GB-78).